A 351-amino-acid polypeptide reads, in one-letter code: Histidinol-phosphate aminotransferase (351 aa).

Lys221 is subject to N6-(pyridoxal phosphate)lysine.

The protein belongs to the class-II pyridoxal-phosphate-dependent aminotransferase family. Histidinol-phosphate aminotransferase subfamily. Homodimer. Requires pyridoxal 5'-phosphate as cofactor.

The enzyme catalyses L-histidinol phosphate + 2-oxoglutarate = 3-(imidazol-4-yl)-2-oxopropyl phosphate + L-glutamate. The protein operates within amino-acid biosynthesis; L-histidine biosynthesis; L-histidine from 5-phospho-alpha-D-ribose 1-diphosphate: step 7/9. The polypeptide is Histidinol-phosphate aminotransferase (Staphylococcus haemolyticus (strain JCSC1435)).